The primary structure comprises 692 residues: Meiotic sister-chromatid recombination protein 6, mitochondrial (692 aa).

The N-terminal 30 residues, 1-30 (MLSHNALRAFDCSKVIISRRCLTSSTSIYQ), are a transit peptide targeting the mitochondrion.

Its subcellular location is the mitochondrion. In terms of biological role, may be involved in the control of meiotic sister-chromatid recombination. The protein is Meiotic sister-chromatid recombination protein 6, mitochondrial (MSC6) of Saccharomyces cerevisiae (strain ATCC 204508 / S288c) (Baker's yeast).